A 78-amino-acid chain; its full sequence is Exodeoxyribonuclease 7 small subunit (78 aa).

This sequence belongs to the XseB family. In terms of assembly, heterooligomer composed of large and small subunits.

It localises to the cytoplasm. It catalyses the reaction Exonucleolytic cleavage in either 5'- to 3'- or 3'- to 5'-direction to yield nucleoside 5'-phosphates.. In terms of biological role, bidirectionally degrades single-stranded DNA into large acid-insoluble oligonucleotides, which are then degraded further into small acid-soluble oligonucleotides. This is Exodeoxyribonuclease 7 small subunit from Oceanobacillus iheyensis (strain DSM 14371 / CIP 107618 / JCM 11309 / KCTC 3954 / HTE831).